Here is a 366-residue protein sequence, read N- to C-terminus: Aminomethyltransferase (366 aa).

This sequence belongs to the GcvT family. In terms of assembly, the glycine cleavage system is composed of four proteins: P, T, L and H.

It catalyses the reaction N(6)-[(R)-S(8)-aminomethyldihydrolipoyl]-L-lysyl-[protein] + (6S)-5,6,7,8-tetrahydrofolate = N(6)-[(R)-dihydrolipoyl]-L-lysyl-[protein] + (6R)-5,10-methylene-5,6,7,8-tetrahydrofolate + NH4(+). In terms of biological role, the glycine cleavage system catalyzes the degradation of glycine. This Neisseria meningitidis serogroup A / serotype 4A (strain DSM 15465 / Z2491) protein is Aminomethyltransferase.